A 227-amino-acid polypeptide reads, in one-letter code: MGGTTSTRRVTFEADENENITVVKGIRLSENVIDRMKESSPSGSKSQRYSGAYGASVSDEELKRRVAEELALEQAKKESEDQKRLKQAKELDRERAAANEQLTRAILRERICSEEERAKAKHLARQLEEKDRVLKKQDAFYKEQLARLEERSSEFYRVTTEQYQKAAEEVEAKFKRYESHPVCADLQAKILQCYRENTHQTLKCSALATQYMHCVNHAKQSMLEKGG.

G2 carries the N-myristoyl glycine lipid modification. Position 29 is a phosphoserine (S29). Disordered regions lie at residues 34–61 and 73–92; these read DRMK…SDEE and EQAK…KELD. Residues 39–49 are compositionally biased toward polar residues; that stretch reads SSPSGSKSQRY. Residue Y49 is modified to Phosphotyrosine. Phosphoserine occurs at positions 50, 56, and 58. The residue at position 142 (K142) is an N6-acetyllysine. A CHCH domain is found at 180 to 222; sequence HPVCADLQAKILQCYRENTHQTLKCSALATQYMHCVNHAKQSM. Short sequence motifs (cx9C motif) lie at residues 183-193 and 204-214; these read CADLQAKILQC and CSALATQYMHC. 2 disulfides stabilise this stretch: C183–C214 and C193–C204.

The protein belongs to the MICOS complex subunit Mic19 family. Metazoan Mic19 subfamily. Component of the mitochondrial contact site and cristae organizing system (MICOS) complex, composed of at least MICOS10/MIC10, CHCHD3/MIC19, CHCHD6/MIC25, APOOL/MIC27, IMMT/MIC60, APOO/MIC23/MIC26 and MICOS13/MIC13. This complex was also known under the names MINOS or MitOS complex. The MICOS complex associates with mitochondrial outer membrane proteins SAMM50, MTX1 and MTX2 (together described as components of the mitochondrial outer membrane sorting assembly machinery (SAM) complex) and DNAJC11, mitochondrial inner membrane protein TMEM11 and with HSPA9. The MICOS and SAM complexes together with DNAJC11 are part of a large protein complex spanning both membranes termed the mitochondrial intermembrane space bridging (MIB) complex. Interacts with HSPA1A/HSPA1B and OPA1, preferentially with the soluble OPA1 form. Interacts with IMMT/MIC60. As to quaternary structure, (Microbial infection) Interacts with human cytomegalovirus protein UL13; this interaction alters cristae architecture. Detected at low levels in brain, placenta, lung, liver, kidney and pancreas with increased levels in heart and skeletal muscle. Higher expression in primary lung cancers than in normal lung tissue.

The protein localises to the mitochondrion inner membrane. It is found in the cytoplasm. The protein resides in the nucleus. It localises to the mitochondrion. Its function is as follows. Component of the MICOS complex, a large protein complex of the mitochondrial inner membrane that plays crucial roles in the maintenance of crista junctions, inner membrane architecture, and formation of contact sites to the outer membrane. Plays an important role in the maintenance of the MICOS complex stability and the mitochondrial cristae morphology. Has also been shown to function as a transcription factor which binds to the BAG1 promoter and represses BAG1 transcription. This chain is MICOS complex subunit MIC19 (CHCHD3), found in Homo sapiens (Human).